Here is a 274-residue protein sequence, read N- to C-terminus: Rhamnulose-1-phosphate aldolase (274 aa).

The active site involves Glu117. The Zn(2+) site is built by His141, His143, and His212.

Belongs to the aldolase class II family. RhaD subfamily. As to quaternary structure, homotetramer. Zn(2+) serves as cofactor.

Its subcellular location is the cytoplasm. The enzyme catalyses L-rhamnulose 1-phosphate = (S)-lactaldehyde + dihydroxyacetone phosphate. The protein operates within carbohydrate degradation; L-rhamnose degradation; glycerone phosphate from L-rhamnose: step 3/3. Its function is as follows. Catalyzes the reversible cleavage of L-rhamnulose-1-phosphate to dihydroxyacetone phosphate (DHAP) and L-lactaldehyde. The protein is Rhamnulose-1-phosphate aldolase of Yersinia pseudotuberculosis serotype I (strain IP32953).